The sequence spans 348 residues: MTAQSQVLKIRRPDDWHIHLRDDDMLKTVVPYTSEFYGRAIVMPNLVPPVTTVAAAIAYRQRIMDAVPAGHDFTPLMTCYLTDSLDPAELERGFNEGVFTAAKLYPANATTNSSHGVTSTDAIMPVLERMEKLGMPLLVHGEVTHAEIDIFDREARFIETVMEPLRQRLPGLKVVFEHITTKDAAEYVRDGNELLAATITPQHLMFNRNHMLVGGIRPHLYCLPVLKRNIHQQALRELVASGFSRAFLGTDSAPHARHRKEASCGCAGCFNAPTALGSYATVFEEMNALQHFEAFCSLNGPRFYGLPVNESYVELVREETTVVDSIALPNDTLVPFLAGETVRWTVKK.

Positions 17 and 19 each coordinate Zn(2+). Residues His-19–Arg-21 and Asn-45 contribute to the substrate site. The Zn(2+) site is built by Lys-103, His-140, and His-178. Residue Lys-103 is modified to N6-carboxylysine. His-140 lines the substrate pocket. Leu-223 contacts substrate. Residue Asp-251 coordinates Zn(2+). Asp-251 is an active-site residue. The substrate site is built by His-255 and Ala-267.

It belongs to the metallo-dependent hydrolases superfamily. DHOase family. Class II DHOase subfamily. As to quaternary structure, homodimer. Zn(2+) serves as cofactor. It depends on Co(2+) as a cofactor. Requires Mg(2+) as cofactor. Ni(2+) is required as a cofactor.

It carries out the reaction (S)-dihydroorotate + H2O = N-carbamoyl-L-aspartate + H(+). It functions in the pathway pyrimidine metabolism; UMP biosynthesis via de novo pathway; (S)-dihydroorotate from bicarbonate: step 3/3. In terms of biological role, catalyzes the reversible cyclization of carbamoyl aspartate to dihydroorotate. This is Dihydroorotase from Klebsiella pneumoniae subsp. pneumoniae (strain ATCC 700721 / MGH 78578).